A 123-amino-acid chain; its full sequence is Fluoride-specific ion channel FluC (123 aa).

The next 4 membrane-spanning stretches (helical) occupy residues 5-25 (LIIGIGGFIGAILRYVISGII), 29-49 (FGIPTGTFIVNLIGSFIVGFV), 65-85 (LIITGFCGALTTFSTFSYETF), and 94-114 (IKFLTNIFINVMGCLIMIYVG). Na(+) contacts are provided by G72 and T75.

This sequence belongs to the fluoride channel Fluc/FEX (TC 1.A.43) family.

Its subcellular location is the cell membrane. It catalyses the reaction fluoride(in) = fluoride(out). With respect to regulation, na(+) is not transported, but it plays an essential structural role and its presence is essential for fluoride channel function. Fluoride-specific ion channel. Important for reducing fluoride concentration in the cell, thus reducing its toxicity. The protein is Fluoride-specific ion channel FluC of Methanococcus aeolicus (strain ATCC BAA-1280 / DSM 17508 / OCM 812 / Nankai-3).